A 130-amino-acid polypeptide reads, in one-letter code: Small ribosomal subunit protein uS11 (130 aa).

It belongs to the universal ribosomal protein uS11 family. Part of the 30S ribosomal subunit. Interacts with proteins S7 and S18. Binds to IF-3.

In terms of biological role, located on the platform of the 30S subunit, it bridges several disparate RNA helices of the 16S rRNA. Forms part of the Shine-Dalgarno cleft in the 70S ribosome. This Prochlorococcus marinus (strain MIT 9312) protein is Small ribosomal subunit protein uS11.